Here is a 624-residue protein sequence, read N- to C-terminus: Protein NRT1/ PTR FAMILY 6.1 (624 aa).

A disordered region spans residues 1–20 (MVASEIKSPVSVPETPGSSS). 2 helical membrane-spanning segments follow: residues 83–100 (MAYF…FYVM) and 114–134 (FLGI…AYLG). Residue Thr138 is modified to Phosphothreonine. 10 consecutive transmembrane segments (helical) span residues 139–159 (IAIF…GASL), 184–204 (SWQM…AAGI), 230–250 (FFNF…TLVV), 258–278 (WGMA…LFFA), 378–398 (LIPI…YLTL), 422–442 (VFPG…FVPI), 459–479 (VGIG…FENY), 504–524 (WLLI…VGLL), 537–557 (SIGS…ATIL), and 585–605 (CLYW…LWSA).

It belongs to the major facilitator superfamily. Proton-dependent oligopeptide transporter (POT/PTR) (TC 2.A.17) family. As to expression, expressed in flower and siliques.

It localises to the membrane. This chain is Protein NRT1/ PTR FAMILY 6.1 (NPF6.1), found in Arabidopsis thaliana (Mouse-ear cress).